The following is a 325-amino-acid chain: Elongation factor P--(R)-beta-lysine ligase (325 aa).

76 to 78 (SPE) is a substrate binding site. ATP is bound by residues 100–102 (RNE) and N109. A substrate-binding site is contributed by Y118. ATP is bound at residue 244 to 245 (EL). Residue E251 coordinates substrate. G300 contributes to the ATP binding site.

The protein belongs to the class-II aminoacyl-tRNA synthetase family. EpmA subfamily. Homodimer.

It carries out the reaction D-beta-lysine + L-lysyl-[protein] + ATP = N(6)-((3R)-3,6-diaminohexanoyl)-L-lysyl-[protein] + AMP + diphosphate + H(+). Functionally, with EpmB is involved in the beta-lysylation step of the post-translational modification of translation elongation factor P (EF-P) on 'Lys-34'. Catalyzes the ATP-dependent activation of (R)-beta-lysine produced by EpmB, forming a lysyl-adenylate, from which the beta-lysyl moiety is then transferred to the epsilon-amino group of EF-P 'Lys-34'. The polypeptide is Elongation factor P--(R)-beta-lysine ligase (Salmonella gallinarum (strain 287/91 / NCTC 13346)).